The sequence spans 252 residues: Probable ABC transporter ATP-binding protein p29 (252 aa).

One can recognise an ABC transporter domain in the interval 8 to 252 (LEIKNLTFKN…NILDQVFKND (245 aa)). 42–49 (GSSGQGKS) is an ATP binding site.

This sequence belongs to the ABC transporter superfamily.

Part of a high-affinity transport system. In Mesomycoplasma hyorhinis (Mycoplasma hyorhinis), this protein is Probable ABC transporter ATP-binding protein p29.